The chain runs to 356 residues: Non-functional pseudokinase ZRK15 (356 aa).

Residues 62-356 (NRVSELFDEI…SSSSCGETSL (295 aa)) form the Protein kinase domain. ATP contacts are provided by residues 68–76 (FDEIPYDWY) and lysine 94.

Belongs to the protein kinase superfamily. Ser/Thr protein kinase family. ZRK subfamily. Interacts with RPP13L4/ZAR1.

The polypeptide is Non-functional pseudokinase ZRK15 (Arabidopsis thaliana (Mouse-ear cress)).